The primary structure comprises 388 residues: Alanine racemase (388 aa).

K40 functions as the Proton acceptor; specific for D-alanine in the catalytic mechanism. An N6-(pyridoxal phosphate)lysine modification is found at K40. Position 137 (R137) interacts with substrate. Y269 functions as the Proton acceptor; specific for L-alanine in the catalytic mechanism. Residue M318 participates in substrate binding.

The protein belongs to the alanine racemase family. It depends on pyridoxal 5'-phosphate as a cofactor.

The catalysed reaction is L-alanine = D-alanine. It functions in the pathway amino-acid biosynthesis; D-alanine biosynthesis; D-alanine from L-alanine: step 1/1. Catalyzes the interconversion of L-alanine and D-alanine. May also act on other amino acids. In Halalkalibacterium halodurans (strain ATCC BAA-125 / DSM 18197 / FERM 7344 / JCM 9153 / C-125) (Bacillus halodurans), this protein is Alanine racemase (alr).